Reading from the N-terminus, the 394-residue chain is Protein arginine N-methyltransferase 8 (394 aa).

Gly-2 is lipidated: N-myristoyl glycine. The disordered stretch occupies residues 21–40 (VESTEVSSAPPQPPQPVIPA). Short sequence motifs (SH3-binding) lie at residues 29–42 (APPQ…PAKP) and 53–58 (PSCPGR). Positions 30–39 (PPQPPQPVIP) are enriched in pro residues. Arg-58 bears the Omega-N-methylarginine; by PRMT8 mark. At Arg-73 the chain carries Asymmetric dimethylarginine; by PRMT8. Positions 73–394 (RDYYFDSYAH…TSVSNDYKMR (322 aa)) constitute an SAM-dependent MTase PRMT-type domain. S-adenosyl-L-methionine is bound by residues His-86, Arg-95, Gly-119, 119–122 (GSGT), Glu-141, and Glu-170. Catalysis depends on residues Glu-185 and Glu-194.

It belongs to the class I-like SAM-binding methyltransferase superfamily. Protein arginine N-methyltransferase family. PRMT8 subfamily. As to quaternary structure, homodimer. Tetramer; individual homodimers associates to form a homotetramer. Homooctamer; individual homodimers associates to form a homooctamer and homooligomerization is required for proper localization to the cell membrane. Heterodimer with PRMT1; heterodimerization may recruit PRMT1 activity to the plasma membrane. Interacts with PRMT2 (via the SH3 domain). Interacts with FYN (via the SH3 domain). Interacts with EWS; independently of EWS methylation status. Brain-specific. Only expressed in neurons, especially in the somatosensory and limbic systems, and a part of motor system. Highly expressed in all of the regions related to general somatosensory system. Expressed in most of the relay nuclei intervening the special somatosensory system, such as the auditory, visual and vestibular systems. Also present in forebrain limbic areas and thalamic nuclei relevant to limbic areas and in areas related to the motor system, such as the caudate putamen, Purkinje cells, inferior olivary nucleus and cerebellar nuclei.

The protein resides in the cell membrane. The enzyme catalyses L-arginyl-[protein] + S-adenosyl-L-methionine = N(omega)-methyl-L-arginyl-[protein] + S-adenosyl-L-homocysteine + H(+). The catalysed reaction is L-arginyl-[protein] + 2 S-adenosyl-L-methionine = N(omega),N(omega)-dimethyl-L-arginyl-[protein] + 2 S-adenosyl-L-homocysteine + 2 H(+). S-adenosyl-L-methionine-dependent and membrane-associated arginine methyltransferase that can both catalyze the formation of omega-N monomethylarginine (MMA) and asymmetrical dimethylarginine (aDMA) in proteins such as NIFK, myelin basic protein, histone H4, H2A and H2A/H2B dimer. Able to mono- and dimethylate EWS protein; however its precise role toward EWS remains unclear as it still interacts with fully methylated EWS. In Mus musculus (Mouse), this protein is Protein arginine N-methyltransferase 8.